The sequence spans 312 residues: DNA-directed RNA polymerase subunit alpha (312 aa).

Residues 1–226 (MIEFEKPNIT…EHLNLFTNLT (226 aa)) are alpha N-terminal domain (alpha-NTD). Positions 243 to 312 (DDRILERTIE…DLGLGLKNDK (70 aa)) are alpha C-terminal domain (alpha-CTD).

The protein belongs to the RNA polymerase alpha chain family. In terms of assembly, homodimer. The RNAP catalytic core consists of 2 alpha, 1 beta, 1 beta' and 1 omega subunit. When a sigma factor is associated with the core the holoenzyme is formed, which can initiate transcription.

The catalysed reaction is RNA(n) + a ribonucleoside 5'-triphosphate = RNA(n+1) + diphosphate. DNA-dependent RNA polymerase catalyzes the transcription of DNA into RNA using the four ribonucleoside triphosphates as substrates. The polypeptide is DNA-directed RNA polymerase subunit alpha (Streptococcus sanguinis (strain SK36)).